We begin with the raw amino-acid sequence, 567 residues long: Dihydroxy-acid dehydratase (567 aa).

[2Fe-2S] cluster is bound at residue Cys57. Residue Asp89 coordinates Mg(2+). Cys130 is a binding site for [2Fe-2S] cluster. Positions 131 and 132 each coordinate Mg(2+). Lys132 is subject to N6-carboxylysine. A [2Fe-2S] cluster-binding site is contributed by Cys202. Residue Glu453 coordinates Mg(2+). Residue Ser479 is the Proton acceptor of the active site.

It belongs to the IlvD/Edd family. Homodimer. The cofactor is [2Fe-2S] cluster. Mg(2+) serves as cofactor.

The catalysed reaction is (2R)-2,3-dihydroxy-3-methylbutanoate = 3-methyl-2-oxobutanoate + H2O. It catalyses the reaction (2R,3R)-2,3-dihydroxy-3-methylpentanoate = (S)-3-methyl-2-oxopentanoate + H2O. It participates in amino-acid biosynthesis; L-isoleucine biosynthesis; L-isoleucine from 2-oxobutanoate: step 3/4. The protein operates within amino-acid biosynthesis; L-valine biosynthesis; L-valine from pyruvate: step 3/4. Its function is as follows. Functions in the biosynthesis of branched-chain amino acids. Catalyzes the dehydration of (2R,3R)-2,3-dihydroxy-3-methylpentanoate (2,3-dihydroxy-3-methylvalerate) into 2-oxo-3-methylpentanoate (2-oxo-3-methylvalerate) and of (2R)-2,3-dihydroxy-3-methylbutanoate (2,3-dihydroxyisovalerate) into 2-oxo-3-methylbutanoate (2-oxoisovalerate), the penultimate precursor to L-isoleucine and L-valine, respectively. This is Dihydroxy-acid dehydratase from Nocardioides sp. (strain ATCC BAA-499 / JS614).